A 270-amino-acid polypeptide reads, in one-letter code: Catechol 1,2-dioxygenase (270 aa).

Fe cation is bound by residues tyrosine 152, tyrosine 186, histidine 210, and histidine 212.

This sequence belongs to the intradiol ring-cleavage dioxygenase family. Fe(3+) serves as cofactor.

It catalyses the reaction catechol + O2 = cis,cis-muconate + 2 H(+). In Rhodococcus opacus (Nocardia opaca), this protein is Catechol 1,2-dioxygenase (catA).